Reading from the N-terminus, the 87-residue chain is Small ribosomal subunit protein eS21 (87 aa).

This sequence belongs to the eukaryotic ribosomal protein eS21 family. Component of the small ribosomal subunit (SSU). Mature N.crassa ribosomes consist of a small (40S) and a large (60S) subunit. The 40S small subunit contains 1 molecule of ribosomal RNA (18S rRNA) and at least 32 different proteins. The large 60S subunit contains 3 rRNA molecules (26S, 5.8S and 5S rRNA) and at least 42 different proteins.

Its subcellular location is the cytoplasm. Functionally, component of the ribosome, a large ribonucleoprotein complex responsible for the synthesis of proteins in the cell. The small ribosomal subunit (SSU) binds messenger RNAs (mRNAs) and translates the encoded message by selecting cognate aminoacyl-transfer RNA (tRNA) molecules. The large subunit (LSU) contains the ribosomal catalytic site termed the peptidyl transferase center (PTC), which catalyzes the formation of peptide bonds, thereby polymerizing the amino acids delivered by tRNAs into a polypeptide chain. The nascent polypeptides leave the ribosome through a tunnel in the LSU and interact with protein factors that function in enzymatic processing, targeting, and the membrane insertion of nascent chains at the exit of the ribosomal tunnel. The chain is Small ribosomal subunit protein eS21 (crp-7) from Neurospora crassa (strain ATCC 24698 / 74-OR23-1A / CBS 708.71 / DSM 1257 / FGSC 987).